The following is a 535-amino-acid chain: MPAKKTMAQRLGQALETMTRQCGQLPETPAYGSWLLGRVSESPSRRWVRIKRIVTVYIMTANLTGIVVALLVVTFAFPVPSIYTDAPWWVTFGVAPAYATLALAIGTYWITTRIVRASIRWAIEERAPSQADGRNTLLLPFRVAAVHLILWDIGGALLATLYGLANRVFVTIILFSVTICGVLVATNCYLFTEFALRPVAAKALEAGRPPRRFAPGIMGRTMTVWSLGSGVPVTGIATTALYVLLVHNLTETQLASAVLILSITTLIFGFLVMWILAWLTAAPVRVVRAALKRVEQGDLRGDLVVFDGTELGELQRGFNAMVNGLRERERVRDLFGRHVGREVAAAAERERPQLGGEDRHAAVVFVDIVGSTQLVDNQPAAHVVKLLNRFFAIVVNEVDRHHGLINKFAGDAALAIFGAPNRLDRPEDAALAAARAIADRLANEMPEVQAGIGVAAGQIVAGNVGAKQRFEYTVVGKPVNQAARLCELAKSHPARLLASSDTLHAASETERAHWSLGETVTLRGHEQPTRLAVPT.

6 consecutive transmembrane segments (helical) span residues 63-83 (LTGIVVALLVVTFAFPVPSIY), 90-110 (VTFGVAPAYATLALAIGTYWI), 143-163 (VAAVHLILWDIGGALLATLYG), 168-188 (VFVTIILFSVTICGVLVATNC), 226-246 (SLGSGVPVTGIATTALYVLLV), and 258-278 (VLILSITTLIFGFLVMWILAW). The HAMP domain occupies 279 to 330 (LTAAPVRVVRAALKRVEQGDLRGDLVVFDGTELGELQRGFNAMVNGLRERER). In terms of domain architecture, Guanylate cyclase spans 362–486 (AVVFVDIVGS…KPVNQAARLC (125 aa)).

The protein belongs to the adenylyl cyclase class-3 family.

It localises to the cell membrane. This is an uncharacterized protein from Mycobacterium tuberculosis (strain ATCC 25618 / H37Rv).